A 547-amino-acid chain; its full sequence is Inositol 1,4,5-trisphosphate receptor-interacting protein-like 1 (547 aa).

A signal peptide spans 1 to 16 (MAVISLLFLAVMYVVH). At 17–96 (HPLMVSDRMD…PFQASGQDGG (80 aa)) the chain is on the extracellular side. A coiled-coil region spans residues 28-66 (DTLARSRQLEKRMSEEMRQLEIEFEERSRAAEEKQKAEN). A helical transmembrane segment spans residues 97–117 (PLGWMLGNLWNAGLFCLFLIF). Residues 118 to 547 (ELLRQNMQHE…LPCSPLAGGL (430 aa)) lie on the Cytoplasmic side of the membrane.

It belongs to the ITPRIP family.

It is found in the cell membrane. Functions as a ligand of CD3E, inhibiting TCR-CD3 complex signaling to regulate T cell activation. Induces stable CD3E-NCK1 binding, thereby preventing the CD3E-ZAP70 interaction and subsequently inhibiting the activation of the downstream ERK-NFkB signaling cascade and calcium influx. This chain is Inositol 1,4,5-trisphosphate receptor-interacting protein-like 1 (Itpripl1), found in Rattus norvegicus (Rat).